We begin with the raw amino-acid sequence, 294 residues long: tRNA dimethylallyltransferase (294 aa).

ATP is bound at residue 10-17; the sequence is GPTAVGKT. 12–17 serves as a coordination point for substrate; sequence TAVGKT. Residues 35–38 form an interaction with substrate tRNA region; sequence DSQQ.

It belongs to the IPP transferase family. As to quaternary structure, monomer. The cofactor is Mg(2+).

It catalyses the reaction adenosine(37) in tRNA + dimethylallyl diphosphate = N(6)-dimethylallyladenosine(37) in tRNA + diphosphate. Functionally, catalyzes the transfer of a dimethylallyl group onto the adenine at position 37 in tRNAs that read codons beginning with uridine, leading to the formation of N6-(dimethylallyl)adenosine (i(6)A). The sequence is that of tRNA dimethylallyltransferase from Streptococcus pneumoniae (strain Hungary19A-6).